Here is a 359-residue protein sequence, read N- to C-terminus: MSTENTLSVADLARENVRNLVPYQSARRLGGNGDVWLNANEFPTAVEFQLTQQTLNRYPECQPKAVIENYAQYAGVKPEQVLVSRGADEGIELVIRAFCEPGKDAILYCPPTYGMYSVSAETIGVERRTVPALENWQLDLQGISDNLDGAKVVFVCSPNNPTGQLINPQDLRTLLELTRGKAIVVADEAYIEFCPQATLAGWLVKYPHLVILRTLSKAFALAGLRCGFTLANEEVINLLLKVIAPYPLSTPVADIAAQALSPQGINVMRDRVAQTVQERQYLVNALQQTACVEHVFDSETNYILARFTASSSVFKSLWDQGIILRDQNKQPSLSGCLRITVGTRQENQRVIDALRAEPV.

Position 217 is an N6-(pyridoxal phosphate)lysine (lysine 217).

This sequence belongs to the class-II pyridoxal-phosphate-dependent aminotransferase family. Histidinol-phosphate aminotransferase subfamily. Homodimer. Pyridoxal 5'-phosphate serves as cofactor.

The enzyme catalyses L-histidinol phosphate + 2-oxoglutarate = 3-(imidazol-4-yl)-2-oxopropyl phosphate + L-glutamate. The protein operates within amino-acid biosynthesis; L-histidine biosynthesis; L-histidine from 5-phospho-alpha-D-ribose 1-diphosphate: step 7/9. In Salmonella typhi, this protein is Histidinol-phosphate aminotransferase.